Reading from the N-terminus, the 330-residue chain is Lipoyl synthase (330 aa).

7 residues coordinate [4Fe-4S] cluster: Cys55, Cys60, Cys66, Cys81, Cys85, Cys88, and Ser292. In terms of domain architecture, Radical SAM core spans 67–281 (WEDREATFLI…AEEAREIGFV (215 aa)).

Belongs to the radical SAM superfamily. Lipoyl synthase family. [4Fe-4S] cluster is required as a cofactor.

Its subcellular location is the cytoplasm. It carries out the reaction [[Fe-S] cluster scaffold protein carrying a second [4Fe-4S](2+) cluster] + N(6)-octanoyl-L-lysyl-[protein] + 2 oxidized [2Fe-2S]-[ferredoxin] + 2 S-adenosyl-L-methionine + 4 H(+) = [[Fe-S] cluster scaffold protein] + N(6)-[(R)-dihydrolipoyl]-L-lysyl-[protein] + 4 Fe(3+) + 2 hydrogen sulfide + 2 5'-deoxyadenosine + 2 L-methionine + 2 reduced [2Fe-2S]-[ferredoxin]. It participates in protein modification; protein lipoylation via endogenous pathway; protein N(6)-(lipoyl)lysine from octanoyl-[acyl-carrier-protein]: step 2/2. Functionally, catalyzes the radical-mediated insertion of two sulfur atoms into the C-6 and C-8 positions of the octanoyl moiety bound to the lipoyl domains of lipoate-dependent enzymes, thereby converting the octanoylated domains into lipoylated derivatives. The sequence is that of Lipoyl synthase from Cutibacterium acnes (strain DSM 16379 / KPA171202) (Propionibacterium acnes).